Consider the following 752-residue polypeptide: Granule-bound starch synthase 2, chloroplastic/amyloplastic (752 aa).

The N-terminal 57 residues, M1–R57, are a transit peptide targeting the chloroplast. Disordered regions lie at residues L116–A146 and F224–P253. K275 serves as a coordination point for ADP-alpha-D-glucose.

The protein belongs to the glycosyltransferase 1 family. Bacterial/plant glycogen synthase subfamily. In terms of tissue distribution, widely expressed.

The protein resides in the plastid. It localises to the chloroplast. The protein localises to the amyloplast. The catalysed reaction is [(1-&gt;4)-alpha-D-glucosyl](n) + ADP-alpha-D-glucose = [(1-&gt;4)-alpha-D-glucosyl](n+1) + ADP + H(+). Its pathway is glycan biosynthesis; starch biosynthesis. This Pisum sativum (Garden pea) protein is Granule-bound starch synthase 2, chloroplastic/amyloplastic.